The primary structure comprises 2274 residues: Adenomatous polyposis coli protein 2 (2274 aa).

The stretch at Met5–Gln59 forms a coiled coil. Disordered regions lie at residues Gly97–Phe120 and Val248–Asn269. ARM repeat units follow at residues Pro301–Asp341, Ala472–Trp511, Ile515–Ala555, Ser557–Ser602, Glu608–Ala647, and Pro650–Ala689. A coiled-coil region spans residues Ala832–Leu856. Disordered stretches follow at residues Ser859–Ala901, Cys1061–Gln1143, and Ser1165–Phe1216. Positions Asp861–Asp870 are enriched in low complexity. Repeat unit 1 spans residues Leu1049 to Ser1068. The 5 X 20 AA approximate repeat of F-X-V-E-X-T-P-X-C-F-S-R-X-S-S-L-S-S-L-S stretch occupies residues Leu1049–Ser1565. The interval Leu1049–Ser1565 is interaction with CTNNB1. The span at Gln1077 to Ser1086 shows a compositional bias: polar residues. Residues Glu1092–Ala1103 show a composition bias toward low complexity. Over residues Thr1133–Gln1143 the composition is skewed to polar residues. Repeat unit 2 spans residues Asn1140 to Gly1159. Copy 3 of the repeat occupies Phe1250–Ala1269. Disordered stretches follow at residues Glu1290–Asp1323, Arg1368–Leu1480, Phe1493–Pro1631, Ser1699–Pro2003, Pro2022–Glu2122, and Thr2135–Glu2274. A compositionally biased stretch (polar residues) spans Thr1374 to Gly1397. Copy 4 of the repeat occupies Asp1375–Thr1394. Over residues Ser1399 to Lys1411 the composition is skewed to basic and acidic residues. Residues Arg1455–Arg1470 show a composition bias toward polar residues. A compositionally biased stretch (basic and acidic residues) spans Leu1517–Pro1529. Residues Leu1546–Ser1565 form repeat 5. The segment covering Ser1556–Ala1574 has biased composition (low complexity). Residues Ser1563 and Ser1565 each carry the phosphoserine modification. Residues Pro1608–Ala1624 show a composition bias toward basic residues. 2 stretches are compositionally biased toward low complexity: residues Ser1780–Thr1795 and Leu1839–Gly1868. The required for localization to microtubules and function in microtubule stabilization stretch occupies residues Ser1792–Leu1871. Ser1861 bears the Phosphoserine mark. A compositionally biased stretch (pro residues) spans Arg1910–Glu1921. 2 stretches are compositionally biased toward low complexity: residues Arg1945–Glu1955 and Leu1983–Ser1997. An interaction with MAPRE1 and MAPRE3 region spans residues Gly2037–Thr2114. The segment covering Asp2165–Leu2179 has biased composition (polar residues).

This sequence belongs to the adenomatous polyposis coli (APC) family. As to quaternary structure, interacts with PSRC1. Interacts with MAPRE3. Interacts with APC, CTNNB1, TP53BP2, MAPRE1 and possibly with AXIN2. In terms of tissue distribution, expressed in brain and other neural tissues.

It is found in the cytoplasm. Its subcellular location is the cytoskeleton. It localises to the golgi apparatus. The protein resides in the perinuclear region. Its function is as follows. Stabilizes microtubules and may regulate actin fiber dynamics through the activation of Rho family GTPases. May also function in Wnt signaling by promoting the rapid degradation of CTNNB1. The polypeptide is Adenomatous polyposis coli protein 2 (Apc2) (Mus musculus (Mouse)).